Consider the following 405-residue polypeptide: Argininosuccinate synthase (405 aa).

ATP contacts are provided by residues 10–18 (AYSGGLDTS) and A37. Y88 and S93 together coordinate L-citrulline. G118 provides a ligand contact to ATP. 3 residues coordinate L-aspartate: T120, N124, and D125. An L-citrulline-binding site is contributed by N124. Positions 128, 179, 188, 264, and 276 each coordinate L-citrulline.

It belongs to the argininosuccinate synthase family. Type 1 subfamily. In terms of assembly, homotetramer.

The protein resides in the cytoplasm. It catalyses the reaction L-citrulline + L-aspartate + ATP = 2-(N(omega)-L-arginino)succinate + AMP + diphosphate + H(+). It functions in the pathway amino-acid biosynthesis; L-arginine biosynthesis; L-arginine from L-ornithine and carbamoyl phosphate: step 2/3. This is Argininosuccinate synthase from Pseudomonas putida (strain GB-1).